A 518-amino-acid polypeptide reads, in one-letter code: Glutamate--cysteine ligase (518 aa).

The protein belongs to the glutamate--cysteine ligase type 1 family. Type 1 subfamily.

The enzyme catalyses L-cysteine + L-glutamate + ATP = gamma-L-glutamyl-L-cysteine + ADP + phosphate + H(+). The protein operates within sulfur metabolism; glutathione biosynthesis; glutathione from L-cysteine and L-glutamate: step 1/2. The polypeptide is Glutamate--cysteine ligase (Escherichia coli O127:H6 (strain E2348/69 / EPEC)).